The chain runs to 302 residues: MSFTAYSDPCWPWSRGRPIARSARRHVAWVAGYLCVSRFGHDRCICRRGSFWPETRVQRVAGLQWSQLLLPVKCLNFWLYTLCYAAGMGSFFVFFSIAPGLMMGRPRCVSAWLQPAVRHSAIAMVFTARFMGSVIPKWGSPSVLRMGMGCLIAGAVLLAITEIWALHRVRLYCSNVASGIGVATAVSVPMALFEDSTMLLERSRQSTSAWACTARKHRNVDHFAVAAQRLGPCRVTVWTLATVVLGLSCVSRVKGSRGQGEHDAGRATNVGKYIKSQSLRECGKLSPNKCCSRPKTYAFRLG.

Its subcellular location is the cell membrane. Its function is as follows. This protein is thought to be a membrane-associated barrier of drug uptake. The chain is Chloramphenicol resistance protein (cml) from Escherichia coli.